Consider the following 335-residue polypeptide: Methionine import ATP-binding protein MetN (335 aa).

One can recognise an ABC transporter domain in the interval I2–V241. Residue G38–S45 coordinates ATP.

The protein belongs to the ABC transporter superfamily. Methionine importer (TC 3.A.1.24) family. As to quaternary structure, the complex is composed of two ATP-binding proteins (MetN), two transmembrane proteins (MetI) and a solute-binding protein (MetQ).

It localises to the cell inner membrane. The enzyme catalyses L-methionine(out) + ATP + H2O = L-methionine(in) + ADP + phosphate + H(+). The catalysed reaction is D-methionine(out) + ATP + H2O = D-methionine(in) + ADP + phosphate + H(+). In terms of biological role, part of the ABC transporter complex MetNIQ involved in methionine import. Responsible for energy coupling to the transport system. The polypeptide is Methionine import ATP-binding protein MetN (Xanthomonas oryzae pv. oryzae (strain MAFF 311018)).